A 258-amino-acid polypeptide reads, in one-letter code: tRNA (guanine-N(7)-)-methyltransferase (258 aa).

Residues Gly-76, 99-100 (EI), 132-133 (NA), and Leu-152 each bind S-adenosyl-L-methionine. Asp-155 is an active-site residue. 230 to 232 (TEE) contacts S-adenosyl-L-methionine.

It belongs to the class I-like SAM-binding methyltransferase superfamily. TrmB family.

Its subcellular location is the nucleus. The catalysed reaction is guanosine(46) in tRNA + S-adenosyl-L-methionine = N(7)-methylguanosine(46) in tRNA + S-adenosyl-L-homocysteine. It functions in the pathway tRNA modification; N(7)-methylguanine-tRNA biosynthesis. Catalyzes the formation of N(7)-methylguanine at position 46 (m7G46) in tRNA. This chain is tRNA (guanine-N(7)-)-methyltransferase, found in Brugia malayi (Filarial nematode worm).